Consider the following 131-residue polypeptide: Agouti-signaling protein (131 aa).

Residues 1 to 22 (MDVTRLLLATLVGFLCFFTVHS) form the signal peptide. The N-linked (GlcNAc...) asparagine glycan is linked to asparagine 39. Positions 58-100 (KSKKISRKEAEKRKRSSKKKASMKKVARPPPPSPCVATRDSCK) are disordered. Residues 70-84 (RKRSSKKKASMKKVA) are compositionally biased toward basic residues. 5 disulfide bridges follow: cysteine 92-cysteine 107, cysteine 99-cysteine 113, cysteine 106-cysteine 124, cysteine 110-cysteine 131, and cysteine 115-cysteine 122. The region spanning 92–131 (CVATRDSCKPPAPACCDPCASCQCRFFGSACTCRVLNPNC) is the Agouti domain.

As to expression, epithelial cells of the hair follicles and the epidermis.

It is found in the secreted. Involved in the regulation of melanogenesis. The binding of ASP to MC1R precludes alpha-MSH initiated signaling and thus blocks production of cAMP, leading to a down-regulation of eumelanogenesis (brown/black pigment) and thus increasing synthesis of pheomelanin (yellow/red pigment). Causes hair follicle melanocytes to synthesize phaeomelanin instead of black or brown pigment eumelanin and produces hairs with a subapical yellow band on an otherwise black or brown background when expressed during the mid-portion of hair growth. This Mus musculus (Mouse) protein is Agouti-signaling protein (Asip).